The sequence spans 249 residues: Secreted flagellin C (249 aa).

Interacts with FliS.

It localises to the secreted. Its function is as follows. Might play a role in virulence. The chain is Secreted flagellin C (flaC) from Campylobacter jejuni subsp. jejuni serotype O:6 (strain 81116 / NCTC 11828).